We begin with the raw amino-acid sequence, 397 residues long: 1-deoxy-D-xylulose 5-phosphate reductoisomerase (397 aa).

Thr17, Gly18, Ser19, Ile20, Asn47, and Asn130 together coordinate NADPH. Lys131 lines the 1-deoxy-D-xylulose 5-phosphate pocket. Glu132 is a binding site for NADPH. Asp156 contacts Mn(2+). 4 residues coordinate 1-deoxy-D-xylulose 5-phosphate: Ser157, Glu158, Ser182, and His205. Mn(2+) is bound at residue Glu158. Gly211 provides a ligand contact to NADPH. Positions 218, 223, 224, and 227 each coordinate 1-deoxy-D-xylulose 5-phosphate. Glu227 is a binding site for Mn(2+).

It belongs to the DXR family. Requires Mg(2+) as cofactor. Mn(2+) serves as cofactor.

The catalysed reaction is 2-C-methyl-D-erythritol 4-phosphate + NADP(+) = 1-deoxy-D-xylulose 5-phosphate + NADPH + H(+). It participates in isoprenoid biosynthesis; isopentenyl diphosphate biosynthesis via DXP pathway; isopentenyl diphosphate from 1-deoxy-D-xylulose 5-phosphate: step 1/6. Its function is as follows. Catalyzes the NADPH-dependent rearrangement and reduction of 1-deoxy-D-xylulose-5-phosphate (DXP) to 2-C-methyl-D-erythritol 4-phosphate (MEP). This chain is 1-deoxy-D-xylulose 5-phosphate reductoisomerase, found in Allorhizobium ampelinum (strain ATCC BAA-846 / DSM 112012 / S4) (Agrobacterium vitis (strain S4)).